Reading from the N-terminus, the 242-residue chain is DNA repair protein RecO (242 aa).

It belongs to the RecO family. Monomer.

Involved in DNA repair and RecF pathway recombination. The protein is DNA repair protein RecO of Salmonella enteritidis PT4 (strain P125109).